Consider the following 115-residue polypeptide: NADH-ubiquinone oxidoreductase chain 3 (115 aa).

The next 3 membrane-spanning stretches (helical) occupy residues 4 to 24 (LVTMLINTTLSFVLILIAFWL), 55 to 75 (FFLVAITFLLFDLEIALLLPM), and 86 to 106 (TMTLTAFILLSVLALGLAYEW).

Belongs to the complex I subunit 3 family. In terms of assembly, core subunit of respiratory chain NADH dehydrogenase (Complex I) which is composed of 45 different subunits. Interacts with TMEM186. Interacts with TMEM242.

It is found in the mitochondrion inner membrane. It catalyses the reaction a ubiquinone + NADH + 5 H(+)(in) = a ubiquinol + NAD(+) + 4 H(+)(out). Core subunit of the mitochondrial membrane respiratory chain NADH dehydrogenase (Complex I) which catalyzes electron transfer from NADH through the respiratory chain, using ubiquinone as an electron acceptor. Essential for the catalytic activity of complex I. The sequence is that of NADH-ubiquinone oxidoreductase chain 3 from Nelsonia neotomodon (Diminutive woodrat).